The following is a 446-amino-acid chain: Phosphoglucosamine mutase (446 aa).

Residue S103 is the Phosphoserine intermediate of the active site. Positions 103, 242, 244, and 246 each coordinate Mg(2+). S103 is modified (phosphoserine).

This sequence belongs to the phosphohexose mutase family. Mg(2+) is required as a cofactor. Post-translationally, activated by phosphorylation.

The enzyme catalyses alpha-D-glucosamine 1-phosphate = D-glucosamine 6-phosphate. Functionally, catalyzes the conversion of glucosamine-6-phosphate to glucosamine-1-phosphate. This Vibrio campbellii (strain ATCC BAA-1116) protein is Phosphoglucosamine mutase.